Here is a 319-residue protein sequence, read N- to C-terminus: Olfactory receptor 10Q1 (319 aa).

At 1–29 the chain is on the extracellular side; that stretch reads MPVGKLVFNQSEPTEFVFRAFTTATEFQV. N-linked (GlcNAc...) asparagine glycosylation occurs at Asn9. A helical membrane pass occupies residues 30–50; that stretch reads LLFLLFLLLYLMILCGNTAII. At 51–58 the chain is on the cytoplasmic side; sequence WVVCTHST. A helical membrane pass occupies residues 59–79; that stretch reads LRTPMYFFLSNLSFLELCYTT. Over 80 to 103 the chain is Extracellular; the sequence is VVVPLMLSNILGAQKPISLAGCGA. Residues Cys101 and Cys194 are joined by a disulfide bond. A helical membrane pass occupies residues 104-124; the sequence is QMFFFVTLGSTDCFLLAIMAY. Topologically, residues 125 to 143 are cytoplasmic; sequence DRYVAICHPLHYTLIMTRE. Residues 144–164 form a helical membrane-spanning segment; sequence LCTQMLGGALGLALFPSLQLT. Residues 165 to 202 are Extracellular-facing; sequence ALIFTLPFCGHHQEINHFLCDVPPVLRLACADIRVHQA. Residues 203–222 form a helical membrane-spanning segment; the sequence is VLYVVSILVLTIPFLLICVS. Topologically, residues 223–242 are cytoplasmic; the sequence is YVFITCAILSIRSAEGRRRA. A helical transmembrane segment spans residues 243-263; it reads FSTCSFHLTVVLLQYGCCSLV. The Extracellular segment spans residues 264–276; it reads YLRPRSSTSEDED. Residues 277–297 traverse the membrane as a helical segment; that stretch reads SQIALVYTFVTPLLNPLLYSL. The Cytoplasmic segment spans residues 298–319; that stretch reads RNKDVKGALRSAIIRKAASDAN.

The protein belongs to the G-protein coupled receptor 1 family.

The protein resides in the cell membrane. In terms of biological role, odorant receptor. The sequence is that of Olfactory receptor 10Q1 (OR10Q1) from Homo sapiens (Human).